We begin with the raw amino-acid sequence, 400 residues long: Tyrosine--tRNA ligase (400 aa).

Positions 45 to 54 (PTAPDLHLGH) match the 'HIGH' region motif. Residues 230 to 234 (KMSKS) carry the 'KMSKS' region motif. An ATP-binding site is contributed by lysine 233. In terms of domain architecture, S4 RNA-binding spans 339 to 399 (EWIARVLVIA…GKRRFAKVII (61 aa)).

It belongs to the class-I aminoacyl-tRNA synthetase family. TyrS type 2 subfamily. As to quaternary structure, homodimer.

It localises to the cytoplasm. It catalyses the reaction tRNA(Tyr) + L-tyrosine + ATP = L-tyrosyl-tRNA(Tyr) + AMP + diphosphate + H(+). Functionally, catalyzes the attachment of tyrosine to tRNA(Tyr) in a two-step reaction: tyrosine is first activated by ATP to form Tyr-AMP and then transferred to the acceptor end of tRNA(Tyr). In Helicobacter hepaticus (strain ATCC 51449 / 3B1), this protein is Tyrosine--tRNA ligase.